The following is a 123-amino-acid chain: F-box protein PP2-B3 (123 aa).

Residues 10–56 form the F-box domain; the sequence is PSPFDGLPENCISNIISFTTPRDACFAASVSKAFESAVQSDSVWEKF.

In Arabidopsis thaliana (Mouse-ear cress), this protein is F-box protein PP2-B3 (PP2B3).